The sequence spans 513 residues: Bifunctional purine biosynthesis protein PurH (513 aa).

Residues 1 to 144 enclose the MGS-like domain; it reads MSKRALISVS…KNHERVGIVV (144 aa).

It belongs to the PurH family.

The catalysed reaction is (6R)-10-formyltetrahydrofolate + 5-amino-1-(5-phospho-beta-D-ribosyl)imidazole-4-carboxamide = 5-formamido-1-(5-phospho-D-ribosyl)imidazole-4-carboxamide + (6S)-5,6,7,8-tetrahydrofolate. It carries out the reaction IMP + H2O = 5-formamido-1-(5-phospho-D-ribosyl)imidazole-4-carboxamide. The protein operates within purine metabolism; IMP biosynthesis via de novo pathway; 5-formamido-1-(5-phospho-D-ribosyl)imidazole-4-carboxamide from 5-amino-1-(5-phospho-D-ribosyl)imidazole-4-carboxamide (10-formyl THF route): step 1/1. Its pathway is purine metabolism; IMP biosynthesis via de novo pathway; IMP from 5-formamido-1-(5-phospho-D-ribosyl)imidazole-4-carboxamide: step 1/1. This chain is Bifunctional purine biosynthesis protein PurH, found in Moorella thermoacetica (strain ATCC 39073 / JCM 9320).